The sequence spans 440 residues: Glutamyl-tRNA reductase (440 aa).

Substrate-binding positions include 47–50, S110, 115–117, and Q121; these read TCNR and ERE. Residue C48 is the Nucleophile of the active site. 192–197 provides a ligand contact to NADP(+); it reads GTGAYA.

This sequence belongs to the glutamyl-tRNA reductase family. In terms of assembly, homodimer.

The catalysed reaction is (S)-4-amino-5-oxopentanoate + tRNA(Glu) + NADP(+) = L-glutamyl-tRNA(Glu) + NADPH + H(+). Its pathway is porphyrin-containing compound metabolism; protoporphyrin-IX biosynthesis; 5-aminolevulinate from L-glutamyl-tRNA(Glu): step 1/2. In terms of biological role, catalyzes the NADPH-dependent reduction of glutamyl-tRNA(Glu) to glutamate 1-semialdehyde (GSA). This Paenarthrobacter aurescens (strain TC1) protein is Glutamyl-tRNA reductase.